The primary structure comprises 540 residues: 2,3-bisphosphoglycerate-independent phosphoglycerate mutase (540 aa).

Mn(2+)-binding residues include aspartate 24 and serine 74. The active-site Phosphoserine intermediate is serine 74. Substrate contacts are provided by residues histidine 135, 165–166, arginine 197, arginine 203, 268–271, and lysine 341; these read RD and RPDR. The Mn(2+) site is built by aspartate 408, histidine 412, aspartate 449, histidine 450, and histidine 467.

Belongs to the BPG-independent phosphoglycerate mutase family. Monomer. Mn(2+) is required as a cofactor.

It catalyses the reaction (2R)-2-phosphoglycerate = (2R)-3-phosphoglycerate. It participates in carbohydrate degradation; glycolysis; pyruvate from D-glyceraldehyde 3-phosphate: step 3/5. Functionally, catalyzes the interconversion of 2-phosphoglycerate and 3-phosphoglycerate. In Prochlorococcus marinus (strain MIT 9303), this protein is 2,3-bisphosphoglycerate-independent phosphoglycerate mutase.